We begin with the raw amino-acid sequence, 459 residues long: Glutamate--isopropylamine ligase (459 aa).

The region spanning 19 to 115 is the GS beta-grasp domain; the sequence is HNIDTIRLGA…VLCDIQHLNG (97 aa). One can recognise a GS catalytic domain in the interval 122–459; sequence PRNLLRKAIE…WELARYLDII (338 aa).

The protein belongs to the glutamine synthetase family.

The catalysed reaction is isopropylamine + L-glutamate + ATP = gamma-L-glutamyl-isopropylamide + ADP + phosphate + H(+). Functionally, involved in the degradation of isopropylamine, which is a constituent of the herbicides atrazine. Catalyzes the ATP-dependent formation of gamma-glutamyl-isopropylamide from isopropylamine and L-glutamate. It can also use aminoalkanes, amino-alcohols (L-alaninol and D-alaninol) and amino-esters as substrates. This chain is Glutamate--isopropylamine ligase (ipuC), found in Pseudomonas sp.